The chain runs to 429 residues: Glutamate-1-semialdehyde 2,1-aminomutase (429 aa).

Position 268 is an N6-(pyridoxal phosphate)lysine (K268).

It belongs to the class-III pyridoxal-phosphate-dependent aminotransferase family. HemL subfamily. In terms of assembly, homodimer. It depends on pyridoxal 5'-phosphate as a cofactor.

It is found in the cytoplasm. The enzyme catalyses (S)-4-amino-5-oxopentanoate = 5-aminolevulinate. Its pathway is porphyrin-containing compound metabolism; protoporphyrin-IX biosynthesis; 5-aminolevulinate from L-glutamyl-tRNA(Glu): step 2/2. The protein is Glutamate-1-semialdehyde 2,1-aminomutase of Serratia proteamaculans (strain 568).